Consider the following 340-residue polypeptide: DNA-directed RNA polymerase subunit alpha (340 aa).

The interval 1–236 (MLSLSKNWNT…EQLQLFISFE (236 aa)) is alpha N-terminal domain (alpha-NTD). Residues 251-340 (FSPYLLKRVD…LSKRYEDSYN (90 aa)) are alpha C-terminal domain (alpha-CTD).

The protein belongs to the RNA polymerase alpha chain family. In terms of assembly, homodimer. The RNAP catalytic core consists of 2 alpha, 1 beta, 1 beta' and 1 omega subunit. When a sigma factor is associated with the core the holoenzyme is formed, which can initiate transcription.

The catalysed reaction is RNA(n) + a ribonucleoside 5'-triphosphate = RNA(n+1) + diphosphate. Functionally, DNA-dependent RNA polymerase catalyzes the transcription of DNA into RNA using the four ribonucleoside triphosphates as substrates. This chain is DNA-directed RNA polymerase subunit alpha, found in Rickettsia rickettsii (strain Iowa).